The following is a 520-amino-acid chain: RNA polymerase sigma factor sigA (520 aa).

The N-terminal 66 residues, 1-66 (MTATPAVIGL…APATPKLTAV (66 aa)), are a transit peptide targeting the chloroplast. Residues 37-49 (GGGGGGGGGGGGD) are compositionally biased toward gly residues. 3 disordered regions span residues 37–57 (GGGGGGGGGGGGDAMSFAPPA), 87–117 (HHSSAAAALAPPPPPPPPPTPSPASRAAHAH), and 171–190 (SVSARQRRMSGRRRGRTKNG). A compositionally biased stretch (pro residues) spans 96 to 108 (APPPPPPPPPTPS). Basic residues predominate over residues 175–187 (RQRRMSGRRRGRT). A Polymerase core binding motif is present at residues 305-318 (DLIQGGLIGLLRGI). Residues 479–498 (WEDISRQFGLSRERVRQVGL) constitute a DNA-binding region (H-T-H motif).

It belongs to the sigma-70 factor family. In terms of tissue distribution, expressed in shoots. Expressed in the tips of fully elongated leaves. Expressed in leaf blades.

It localises to the plastid. It is found in the chloroplast. Sigma factors are initiation factors that promote the attachment of plastid-encoded RNA polymerase (PEP) to specific initiation sites and are then released. Controls the transcription of the psaA and psaB genes in chloroplast, and thus maintains the abundance of the core protein complex PsaA-PsaB of photosystem I (PSI) in the thylakoid membrane. Maintains PSI activity, sufficient rate of electron transfer from PSII to PSI, and photochemical efficiency. The polypeptide is RNA polymerase sigma factor sigA (Oryza sativa subsp. japonica (Rice)).